A 456-amino-acid chain; its full sequence is Probable tRNA(Ile)-lysidine synthase (456 aa).

Serine 30 to serine 35 contributes to the ATP binding site.

Belongs to the tRNA(Ile)-lysidine synthase family.

It localises to the cytoplasm. The catalysed reaction is cytidine(34) in tRNA(Ile2) + L-lysine + ATP = lysidine(34) in tRNA(Ile2) + AMP + diphosphate + H(+). Its function is as follows. Ligates lysine onto the cytidine present at position 34 of the AUA codon-specific tRNA(Ile) that contains the anticodon CAU, in an ATP-dependent manner. Cytidine is converted to lysidine, thus changing the amino acid specificity of the tRNA from methionine to isoleucine. This chain is Probable tRNA(Ile)-lysidine synthase, found in Schizosaccharomyces pombe (strain 972 / ATCC 24843) (Fission yeast).